The chain runs to 458 residues: Protein unc-93 homolog A (458 aa).

A run of 5 helical transmembrane segments spans residues Val8 to Leu28, Thr42 to Ile62, Trp69 to Asn89, Trp90 to Ala110, and Ile140 to Phe160. A glycan (N-linked (GlcNAc...) asparagine) is linked at Asn190. Helical transmembrane passes span Thr202 to Leu222, Leu258 to Leu275, Cys286 to Leu306, Ala321 to Trp341, Thr345 to Trp365, Leu390 to Thr410, and Leu412 to Leu432.

Belongs to the unc-93 family.

It localises to the cell membrane. This chain is Protein unc-93 homolog A (Unc93a), found in Mus musculus (Mouse).